The following is a 103-amino-acid chain: Large ribosomal subunit protein bL21 (103 aa).

Belongs to the bacterial ribosomal protein bL21 family. Part of the 50S ribosomal subunit. Contacts protein L20.

Its function is as follows. This protein binds to 23S rRNA in the presence of protein L20. This is Large ribosomal subunit protein bL21 from Desulfotalea psychrophila (strain LSv54 / DSM 12343).